The sequence spans 196 residues: DnaA initiator-associating protein DiaA (196 aa).

The SIS domain occupies 34 to 196 (LVQSLLNGNK…DNTLFPHQDD (163 aa)).

It belongs to the SIS family. DiaA subfamily. Homotetramer; dimer of dimers.

Functionally, required for the timely initiation of chromosomal replication via direct interactions with the DnaA initiator protein. The chain is DnaA initiator-associating protein DiaA from Cronobacter sakazakii (strain ATCC BAA-894) (Enterobacter sakazakii).